Reading from the N-terminus, the 211-residue chain is Probable nicotinate-nucleotide adenylyltransferase (211 aa).

This sequence belongs to the NadD family.

The enzyme catalyses nicotinate beta-D-ribonucleotide + ATP + H(+) = deamido-NAD(+) + diphosphate. The protein operates within cofactor biosynthesis; NAD(+) biosynthesis; deamido-NAD(+) from nicotinate D-ribonucleotide: step 1/1. In terms of biological role, catalyzes the reversible adenylation of nicotinate mononucleotide (NaMN) to nicotinic acid adenine dinucleotide (NaAD). The protein is Probable nicotinate-nucleotide adenylyltransferase of Thermoanaerobacter sp. (strain X514).